Consider the following 319-residue polypeptide: Transaldolase (319 aa).

Lysine 126 serves as the catalytic Schiff-base intermediate with substrate.

Belongs to the transaldolase family. Type 1 subfamily. As to quaternary structure, homodimer.

Its subcellular location is the cytoplasm. It carries out the reaction D-sedoheptulose 7-phosphate + D-glyceraldehyde 3-phosphate = D-erythrose 4-phosphate + beta-D-fructose 6-phosphate. The protein operates within carbohydrate degradation; pentose phosphate pathway; D-glyceraldehyde 3-phosphate and beta-D-fructose 6-phosphate from D-ribose 5-phosphate and D-xylulose 5-phosphate (non-oxidative stage): step 2/3. Functionally, transaldolase is important for the balance of metabolites in the pentose-phosphate pathway. This Bordetella avium (strain 197N) protein is Transaldolase.